The sequence spans 154 residues: MIGLLQRVREARVEVAGEIVGRIGPGLLALVCAEQGDSEAQADKLLAKMLKLRIFSDEAGKMNRSVQDLDGQGTCGGLLIVSQFTLAADTRGGNRPSFTQAAPPAQGERLYDYFVAQARAVHPMVATGRFAADMQVHLVNDGPVTLPLRIAPPG.

Residues 142-143 (GP) carry the Gly-cisPro motif, important for rejection of L-amino acids motif.

Belongs to the DTD family. In terms of assembly, homodimer.

The protein localises to the cytoplasm. The enzyme catalyses glycyl-tRNA(Ala) + H2O = tRNA(Ala) + glycine + H(+). The catalysed reaction is a D-aminoacyl-tRNA + H2O = a tRNA + a D-alpha-amino acid + H(+). Its function is as follows. An aminoacyl-tRNA editing enzyme that deacylates mischarged D-aminoacyl-tRNAs. Also deacylates mischarged glycyl-tRNA(Ala), protecting cells against glycine mischarging by AlaRS. Acts via tRNA-based rather than protein-based catalysis; rejects L-amino acids rather than detecting D-amino acids in the active site. By recycling D-aminoacyl-tRNA to D-amino acids and free tRNA molecules, this enzyme counteracts the toxicity associated with the formation of D-aminoacyl-tRNA entities in vivo and helps enforce protein L-homochirality. This Acidovorax sp. (strain JS42) protein is D-aminoacyl-tRNA deacylase.